A 550-amino-acid polypeptide reads, in one-letter code: Mitochondrial distribution and morphology protein 12 (550 aa).

Residues 1-550 (MSIELNWETL…VYPSFWTFLV (550 aa)) form the SMP-LTD domain. Disordered stretches follow at residues 62–168 (ITDP…PQDL), 218–356 (PPQW…TKYR), and 474–493 (TLAS…GGNT). The span at 69–90 (FYEEDPDVDYDDEDEDVEETHD) shows a compositional bias: acidic residues. Residues 125–140 (VASSSSSSVGRGSAPR) are compositionally biased toward low complexity. 4 stretches are compositionally biased toward polar residues: residues 148–157 (PTKSNININT), 251–269 (PSHS…QTAS), 278–289 (TPTSFLRSGQQT), and 296–323 (VSTL…TAQE).

This sequence belongs to the MDM12 family. Component of the ER-mitochondria encounter structure (ERMES) or MDM complex, composed of MMM1, MDM10, MDM12 and MDM34. An MMM1 homodimer associates with one molecule of MDM12 on each side in a pairwise head-to-tail manner, and the SMP-LTD domains of MMM1 and MDM12 generate a continuous hydrophobic tunnel for phospholipid trafficking.

Its subcellular location is the mitochondrion outer membrane. The protein resides in the endoplasmic reticulum membrane. Component of the ERMES/MDM complex, which serves as a molecular tether to connect the endoplasmic reticulum (ER) and mitochondria. Components of this complex are involved in the control of mitochondrial shape and protein biogenesis, and function in nonvesicular lipid trafficking between the ER and mitochondria. MDM12 is required for the interaction of the ER-resident membrane protein MMM1 and the outer mitochondrial membrane-resident beta-barrel protein MDM10. The MDM12-MMM1 subcomplex functions in the major beta-barrel assembly pathway that is responsible for biogenesis of all mitochondrial outer membrane beta-barrel proteins, and acts in a late step after the SAM complex. The MDM10-MDM12-MMM1 subcomplex further acts in the TOM40-specific pathway after the action of the MDM12-MMM1 complex. Essential for establishing and maintaining the structure of mitochondria and maintenance of mtDNA nucleoids. This chain is Mitochondrial distribution and morphology protein 12, found in Pyricularia oryzae (strain 70-15 / ATCC MYA-4617 / FGSC 8958) (Rice blast fungus).